The following is a 120-amino-acid chain: Ribonuclease P protein component (120 aa).

Belongs to the RnpA family. In terms of assembly, consists of a catalytic RNA component (M1 or rnpB) and a protein subunit.

It carries out the reaction Endonucleolytic cleavage of RNA, removing 5'-extranucleotides from tRNA precursor.. In terms of biological role, RNaseP catalyzes the removal of the 5'-leader sequence from pre-tRNA to produce the mature 5'-terminus. It can also cleave other RNA substrates such as 4.5S RNA. The protein component plays an auxiliary but essential role in vivo by binding to the 5'-leader sequence and broadening the substrate specificity of the ribozyme. This is Ribonuclease P protein component from Mycobacterium leprae (strain Br4923).